We begin with the raw amino-acid sequence, 949 residues long: Bifunctional glutamine synthetase adenylyltransferase/adenylyl-removing enzyme (949 aa).

The tract at residues 1–450 (MQNQGNKVLS…HFNATVGGTD (450 aa)) is adenylyl removase. An adenylyl transferase region spans residues 455–949 (NDHWTALFWN…IEIYNEILAI (495 aa)).

The protein belongs to the GlnE family. Mg(2+) serves as cofactor.

The catalysed reaction is [glutamine synthetase]-O(4)-(5'-adenylyl)-L-tyrosine + phosphate = [glutamine synthetase]-L-tyrosine + ADP. It catalyses the reaction [glutamine synthetase]-L-tyrosine + ATP = [glutamine synthetase]-O(4)-(5'-adenylyl)-L-tyrosine + diphosphate. Its function is as follows. Involved in the regulation of glutamine synthetase GlnA, a key enzyme in the process to assimilate ammonia. When cellular nitrogen levels are high, the C-terminal adenylyl transferase (AT) inactivates GlnA by covalent transfer of an adenylyl group from ATP to specific tyrosine residue of GlnA, thus reducing its activity. Conversely, when nitrogen levels are low, the N-terminal adenylyl removase (AR) activates GlnA by removing the adenylyl group by phosphorolysis, increasing its activity. The regulatory region of GlnE binds the signal transduction protein PII (GlnB) which indicates the nitrogen status of the cell. The sequence is that of Bifunctional glutamine synthetase adenylyltransferase/adenylyl-removing enzyme from Shewanella frigidimarina (strain NCIMB 400).